A 101-amino-acid polypeptide reads, in one-letter code: Gamma-secretase subunit PEN-2 (101 aa).

The Cytoplasmic segment spans residues 1-17 (MNLERVSNEEKLNLCRK). The helical intramembrane region spans 18 to 36 (YYLGGFAFLPFLWLVNIFW). Residues 37–57 (FFREAFIVPAYTEQSQIKGYV) are Cytoplasmic-facing. A helical transmembrane segment spans residues 58–78 (WRSAVGFFLWVIVLSTWITIF). The Lumenal segment spans residues 79–101 (QIYRPRWGALGDYLSFTIPLGTP).

This sequence belongs to the PEN-2 family. As to quaternary structure, the functional gamma-secretase complex is composed of at least four polypeptides: a presenilin homodimer (PSEN1 or PSEN2), nicastrin (NCSTN), APH1 (APH1A or APH1B) and PSENEN.

It is found in the endoplasmic reticulum membrane. It localises to the golgi apparatus. The protein localises to the golgi stack membrane. Its subcellular location is the cell membrane. The protein resides in the membrane. Its function is as follows. Essential subunit of the gamma-secretase complex, an endoprotease complex that catalyzes the intramembrane cleavage of integral membrane proteins such as Notch receptors and APP (amyloid-beta precursor protein). The gamma-secretase complex plays a role in Notch and Wnt signaling cascades and regulation of downstream processes via its role in processing key regulatory proteins, and by regulating cytosolic CTNNB1 levels. PSENEN modulates both endoproteolysis of presenilin and gamma-secretase activity. This chain is Gamma-secretase subunit PEN-2 (PSENEN), found in Bos taurus (Bovine).